The sequence spans 348 residues: Holliday junction branch migration complex subunit RuvB (348 aa).

The segment at 4–186 (TDRIISANTA…FGIIQRLEFY (183 aa)) is large ATPase domain (RuvB-L). ATP is bound by residues I25, R26, G67, K70, T71, T72, 133 to 135 (EDY), R176, Y186, and R223. Residue T71 coordinates Mg(2+). Positions 187-257 (SIDDLSKIVY…IADKALSMLK (71 aa)) are small ATPAse domain (RuvB-S). The interval 260–348 (PVGFDHMDHR…SADQQQTLSI (89 aa)) is head domain (RuvB-H). R315 and R320 together coordinate DNA.

This sequence belongs to the RuvB family. In terms of assembly, homohexamer. Forms an RuvA(8)-RuvB(12)-Holliday junction (HJ) complex. HJ DNA is sandwiched between 2 RuvA tetramers; dsDNA enters through RuvA and exits via RuvB. An RuvB hexamer assembles on each DNA strand where it exits the tetramer. Each RuvB hexamer is contacted by two RuvA subunits (via domain III) on 2 adjacent RuvB subunits; this complex drives branch migration. In the full resolvosome a probable DNA-RuvA(4)-RuvB(12)-RuvC(2) complex forms which resolves the HJ.

It is found in the cytoplasm. The enzyme catalyses ATP + H2O = ADP + phosphate + H(+). The RuvA-RuvB-RuvC complex processes Holliday junction (HJ) DNA during genetic recombination and DNA repair, while the RuvA-RuvB complex plays an important role in the rescue of blocked DNA replication forks via replication fork reversal (RFR). RuvA specifically binds to HJ cruciform DNA, conferring on it an open structure. The RuvB hexamer acts as an ATP-dependent pump, pulling dsDNA into and through the RuvAB complex. RuvB forms 2 homohexamers on either side of HJ DNA bound by 1 or 2 RuvA tetramers; 4 subunits per hexamer contact DNA at a time. Coordinated motions by a converter formed by DNA-disengaged RuvB subunits stimulates ATP hydrolysis and nucleotide exchange. Immobilization of the converter enables RuvB to convert the ATP-contained energy into a lever motion, pulling 2 nucleotides of DNA out of the RuvA tetramer per ATP hydrolyzed, thus driving DNA branch migration. The RuvB motors rotate together with the DNA substrate, which together with the progressing nucleotide cycle form the mechanistic basis for DNA recombination by continuous HJ branch migration. Branch migration allows RuvC to scan DNA until it finds its consensus sequence, where it cleaves and resolves cruciform DNA. The protein is Holliday junction branch migration complex subunit RuvB of Francisella tularensis subsp. tularensis (strain FSC 198).